The primary structure comprises 79 residues: DNA-directed RNA polymerase subunit omega (79 aa).

It belongs to the RNA polymerase subunit omega family. The RNAP catalytic core consists of 2 alpha, 1 beta, 1 beta' and 1 omega subunit. When a sigma factor is associated with the core the holoenzyme is formed, which can initiate transcription.

It catalyses the reaction RNA(n) + a ribonucleoside 5'-triphosphate = RNA(n+1) + diphosphate. In terms of biological role, promotes RNA polymerase assembly. Latches the N- and C-terminal regions of the beta' subunit thereby facilitating its interaction with the beta and alpha subunits. In Bdellovibrio bacteriovorus (strain ATCC 15356 / DSM 50701 / NCIMB 9529 / HD100), this protein is DNA-directed RNA polymerase subunit omega.